Reading from the N-terminus, the 358-residue chain is Histamine H2 receptor (358 aa).

The Extracellular portion of the chain corresponds to 1 to 22 (MEPNGTVHSCCLDSMALKVTIS). Residue N4 is glycosylated (N-linked (GlcNAc...) asparagine). A helical transmembrane segment spans residues 23–44 (VVLTTLILITIAGNVVVCLAVS). Topologically, residues 45–57 (LNRRLRSLTNCFI) are cytoplasmic. A helical membrane pass occupies residues 58–81 (VSLAATDLLLGLLVLPFSAIYQLS). The Extracellular portion of the chain corresponds to 82-92 (FTWSFGHVFCN). C91 and C173 are disulfide-bonded. The helical transmembrane segment at 93–114 (IYTSLDVMLCTASILNLFMISL) threads the bilayer. Residues 115-134 (DRYCAVTDPLRYPVLVTPVR) are Cytoplasmic-facing. Residues 135-159 (VAISLVFIWVISITLSFLSIHLGWN) form a helical membrane-spanning segment. Topologically, residues 160 to 179 (SRNGTRGGNDTFKCKVQVNE) are extracellular. Residues 180–203 (VYGLVDGLVTFYLPLLIMCVTYYR) traverse the membrane as a helical segment. The Cytoplasmic portion of the chain corresponds to 204–233 (IFKIAREQAKRINHISSWKAATIREHKATV). A helical transmembrane segment spans residues 234–257 (TLAAVMGAFIICWFPYFTAFVYRG). Residues 258–266 (LRGDDAINE) are Extracellular-facing. A helical membrane pass occupies residues 267–288 (AVEGIVLWLGYANSALNPILYA). At 289–358 (ALNRDFRTAY…LTHPQGNPIR (70 aa)) the chain is on the cytoplasmic side. C304 carries S-palmitoyl cysteine lipidation.

This sequence belongs to the G-protein coupled receptor 1 family.

The protein resides in the cell membrane. Its function is as follows. The H2 subclass of histamine receptors mediates gastric acid secretion. The activity of this receptor is mediated by G proteins which activate adenylyl cyclase. In Rattus norvegicus (Rat), this protein is Histamine H2 receptor (Hrh2).